The primary structure comprises 407 residues: tRNA (guanine(26)-N(2))-dimethyltransferase (407 aa).

In terms of domain architecture, Trm1 methyltransferase spans 10–400; that stretch reads AVTHEGRSII…APWGEVLEAV (391 aa). Positions 50, 82, 99, and 128 each coordinate S-adenosyl-L-methionine.

Belongs to the class I-like SAM-binding methyltransferase superfamily. Trm1 family.

The catalysed reaction is guanosine(26) in tRNA + 2 S-adenosyl-L-methionine = N(2)-dimethylguanosine(26) in tRNA + 2 S-adenosyl-L-homocysteine + 2 H(+). In terms of biological role, dimethylates a single guanine residue at position 26 of a number of tRNAs using S-adenosyl-L-methionine as donor of the methyl groups. The sequence is that of tRNA (guanine(26)-N(2))-dimethyltransferase from Aeropyrum pernix (strain ATCC 700893 / DSM 11879 / JCM 9820 / NBRC 100138 / K1).